A 71-amino-acid polypeptide reads, in one-letter code: MPVIKVRENESFDVALRRFKRSCEKAGLLAEVRAREFYEKPTTIRKREKASLAKRHAKRNFRENARNTRLY.

The span at 48–59 (EKASLAKRHAKR) shows a compositional bias: basic residues. The segment at 48–71 (EKASLAKRHAKRNFRENARNTRLY) is disordered. Residues 60–71 (NFRENARNTRLY) are compositionally biased toward basic and acidic residues.

The protein belongs to the bacterial ribosomal protein bS21 family.

This is Small ribosomal subunit protein bS21 from Glaesserella parasuis serovar 5 (strain SH0165) (Haemophilus parasuis).